The sequence spans 949 residues: Isoleucine--tRNA ligase (949 aa).

Residues P58–H68 carry the 'HIGH' region motif. Position 567 (E567) interacts with L-isoleucyl-5'-AMP. A 'KMSKS' region motif is present at residues K608–S612. K611 is an ATP binding site. Zn(2+)-binding residues include C912, C915, C932, and C935.

This sequence belongs to the class-I aminoacyl-tRNA synthetase family. IleS type 1 subfamily. Monomer. Zn(2+) is required as a cofactor.

The protein resides in the cytoplasm. The enzyme catalyses tRNA(Ile) + L-isoleucine + ATP = L-isoleucyl-tRNA(Ile) + AMP + diphosphate. Its function is as follows. Catalyzes the attachment of isoleucine to tRNA(Ile). As IleRS can inadvertently accommodate and process structurally similar amino acids such as valine, to avoid such errors it has two additional distinct tRNA(Ile)-dependent editing activities. One activity is designated as 'pretransfer' editing and involves the hydrolysis of activated Val-AMP. The other activity is designated 'posttransfer' editing and involves deacylation of mischarged Val-tRNA(Ile). The polypeptide is Isoleucine--tRNA ligase (Vibrio cholerae serotype O1 (strain ATCC 39315 / El Tor Inaba N16961)).